A 145-amino-acid polypeptide reads, in one-letter code: Putative pre-16S rRNA nuclease (145 aa).

Belongs to the YqgF nuclease family.

It localises to the cytoplasm. Could be a nuclease involved in processing of the 5'-end of pre-16S rRNA. The polypeptide is Putative pre-16S rRNA nuclease (Opitutus terrae (strain DSM 11246 / JCM 15787 / PB90-1)).